An 84-amino-acid chain; its full sequence is Cytochrome b559 subunit alpha (84 aa).

The chain crosses the membrane as a helical span at residues 21 to 35 (VIHSITIPSLFIAGW). His-23 is a heme binding site.

It belongs to the PsbE/PsbF family. Heterodimer of an alpha subunit and a beta subunit. PSII is composed of 1 copy each of membrane proteins PsbA, PsbB, PsbC, PsbD, PsbE, PsbF, PsbH, PsbI, PsbJ, PsbK, PsbL, PsbM, PsbT, PsbX, PsbY, PsbZ, Psb30/Ycf12, at least 3 peripheral proteins of the oxygen-evolving complex and a large number of cofactors. It forms dimeric complexes. The cofactor is heme b.

The protein resides in the plastid membrane. This b-type cytochrome is tightly associated with the reaction center of photosystem II (PSII). PSII is a light-driven water:plastoquinone oxidoreductase that uses light energy to abstract electrons from H(2)O, generating O(2) and a proton gradient subsequently used for ATP formation. It consists of a core antenna complex that captures photons, and an electron transfer chain that converts photonic excitation into a charge separation. The sequence is that of Cytochrome b559 subunit alpha from Cuscuta gronovii (Common dodder).